Reading from the N-terminus, the 369-residue chain is Chaperone protein DnaJ (369 aa).

The 67-residue stretch at 7 to 73 (DYYEILGVPR…QKRAMYDRFG (67 aa)) folds into the J domain. The CR-type zinc finger occupies 143-225 (GAEIPVEYER…CGGSGRVLRK (83 aa)). Zn(2+) contacts are provided by Cys-156, Cys-159, Cys-173, Cys-176, Cys-199, Cys-202, Cys-213, and Cys-216. CXXCXGXG motif repeat units follow at residues 156-163 (CPRCGGTG), 173-180 (CPSCGGTG), 199-206 (CERCGGTG), and 213-220 (CHECGGSG).

It belongs to the DnaJ family. As to quaternary structure, homodimer. Requires Zn(2+) as cofactor.

The protein localises to the cytoplasm. Its function is as follows. Participates actively in the response to hyperosmotic and heat shock by preventing the aggregation of stress-denatured proteins and by disaggregating proteins, also in an autonomous, DnaK-independent fashion. Unfolded proteins bind initially to DnaJ; upon interaction with the DnaJ-bound protein, DnaK hydrolyzes its bound ATP, resulting in the formation of a stable complex. GrpE releases ADP from DnaK; ATP binding to DnaK triggers the release of the substrate protein, thus completing the reaction cycle. Several rounds of ATP-dependent interactions between DnaJ, DnaK and GrpE are required for fully efficient folding. Also involved, together with DnaK and GrpE, in the DNA replication of plasmids through activation of initiation proteins. The sequence is that of Chaperone protein DnaJ from Thermotoga maritima (strain ATCC 43589 / DSM 3109 / JCM 10099 / NBRC 100826 / MSB8).